The chain runs to 559 residues: Urocanate hydratase (559 aa).

Residues 53–54 (GG), Gln-131, 177–179 (GMG), Glu-197, Arg-202, 243–244 (NA), 264–268 (QTSAH), 274–275 (YL), and Tyr-323 contribute to the NAD(+) site. The active site involves Cys-411. Gly-493 provides a ligand contact to NAD(+).

Belongs to the urocanase family. It depends on NAD(+) as a cofactor.

The protein localises to the cytoplasm. It carries out the reaction 4-imidazolone-5-propanoate = trans-urocanate + H2O. It participates in amino-acid degradation; L-histidine degradation into L-glutamate; N-formimidoyl-L-glutamate from L-histidine: step 2/3. Catalyzes the conversion of urocanate to 4-imidazolone-5-propionate. In Pseudomonas aeruginosa (strain LESB58), this protein is Urocanate hydratase.